A 401-amino-acid polypeptide reads, in one-letter code: Argininosuccinate synthase (401 aa).

An ATP-binding site is contributed by 8–16 (AYSGGLDTS). Residue Tyr85 coordinates L-citrulline. An ATP-binding site is contributed by Gly115. L-aspartate contacts are provided by Thr117, Asn121, and Asp122. Asn121 serves as a coordination point for L-citrulline. Residues Arg125, Ser173, Glu258, and Tyr270 each coordinate L-citrulline.

Belongs to the argininosuccinate synthase family. Type 1 subfamily. Homotetramer.

Its subcellular location is the cytoplasm. The catalysed reaction is L-citrulline + L-aspartate + ATP = 2-(N(omega)-L-arginino)succinate + AMP + diphosphate + H(+). Its pathway is amino-acid biosynthesis; L-arginine biosynthesis; L-arginine from L-ornithine and carbamoyl phosphate: step 2/3. This Staphylococcus carnosus (strain TM300) protein is Argininosuccinate synthase.